The sequence spans 229 residues: Large ribosomal subunit protein uL1 (229 aa).

It belongs to the universal ribosomal protein uL1 family. As to quaternary structure, part of the 50S ribosomal subunit.

Binds directly to 23S rRNA. The L1 stalk is quite mobile in the ribosome, and is involved in E site tRNA release. Its function is as follows. Protein L1 is also a translational repressor protein, it controls the translation of the L11 operon by binding to its mRNA. The polypeptide is Large ribosomal subunit protein uL1 (Clostridium botulinum (strain ATCC 19397 / Type A)).